Consider the following 518-residue polypeptide: Ribonuclease Y (518 aa).

A helical membrane pass occupies residues 2–22; sequence VLNILLAIVGLIVGLGLGFVI. Residues 91–119 are disordered; the sequence is QREQTLDRKDDSLEKREGSLEEKEEKLGA. In terms of domain architecture, KH spans 208 to 268; that stretch reads TVSVVTLPND…IRREIARMTL (61 aa). The HD domain maps to 334 to 427; the sequence is VLNHSIEVAK…VAAADALSAA (94 aa).

Belongs to the RNase Y family.

The protein resides in the cell membrane. In terms of biological role, endoribonuclease that initiates mRNA decay. In Enterococcus faecalis (strain ATCC 700802 / V583), this protein is Ribonuclease Y.